A 460-amino-acid polypeptide reads, in one-letter code: ATP synthase subunit beta (460 aa).

Residue 150 to 157 (GGAGVGKT) participates in ATP binding.

The protein belongs to the ATPase alpha/beta chains family. As to quaternary structure, F-type ATPases have 2 components, CF(1) - the catalytic core - and CF(0) - the membrane proton channel. CF(1) has five subunits: alpha(3), beta(3), gamma(1), delta(1), epsilon(1). CF(0) has three main subunits: a(1), b(2) and c(9-12). The alpha and beta chains form an alternating ring which encloses part of the gamma chain. CF(1) is attached to CF(0) by a central stalk formed by the gamma and epsilon chains, while a peripheral stalk is formed by the delta and b chains.

The protein resides in the cell inner membrane. It carries out the reaction ATP + H2O + 4 H(+)(in) = ADP + phosphate + 5 H(+)(out). Functionally, produces ATP from ADP in the presence of a proton gradient across the membrane. The catalytic sites are hosted primarily by the beta subunits. The polypeptide is ATP synthase subunit beta (Erwinia tasmaniensis (strain DSM 17950 / CFBP 7177 / CIP 109463 / NCPPB 4357 / Et1/99)).